The following is a 445-amino-acid chain: mRNA cleavage and polyadenylation factor CLP1 (445 aa).

ATP is bound by residues glutamate 33 and 131–136 (SSGKTS).

The protein belongs to the Clp1 family. Clp1 subfamily. Component of a pre-mRNA cleavage factor complex. Interacts directly with PCF11.

It is found in the nucleus. Functionally, required for endonucleolytic cleavage during polyadenylation-dependent pre-mRNA 3'-end formation. This chain is mRNA cleavage and polyadenylation factor CLP1, found in Eremothecium gossypii (strain ATCC 10895 / CBS 109.51 / FGSC 9923 / NRRL Y-1056) (Yeast).